A 493-amino-acid polypeptide reads, in one-letter code: Galactose-1-phosphate uridylyltransferase (493 aa).

This sequence belongs to the galactose-1-phosphate uridylyltransferase type 2 family.

Its subcellular location is the cytoplasm. It carries out the reaction alpha-D-galactose 1-phosphate + UDP-alpha-D-glucose = alpha-D-glucose 1-phosphate + UDP-alpha-D-galactose. It functions in the pathway carbohydrate metabolism; galactose metabolism. The sequence is that of Galactose-1-phosphate uridylyltransferase from Streptococcus pneumoniae serotype 19F (strain G54).